Here is a 236-residue protein sequence, read N- to C-terminus: Ubiquinone biosynthesis O-methyltransferase (236 aa).

Residues R39, G59, D80, and M124 each contribute to the S-adenosyl-L-methionine site.

Belongs to the methyltransferase superfamily. UbiG/COQ3 family.

The catalysed reaction is a 3-demethylubiquinol + S-adenosyl-L-methionine = a ubiquinol + S-adenosyl-L-homocysteine + H(+). It catalyses the reaction a 3-(all-trans-polyprenyl)benzene-1,2-diol + S-adenosyl-L-methionine = a 2-methoxy-6-(all-trans-polyprenyl)phenol + S-adenosyl-L-homocysteine + H(+). The protein operates within cofactor biosynthesis; ubiquinone biosynthesis. O-methyltransferase that catalyzes the 2 O-methylation steps in the ubiquinone biosynthetic pathway. This is Ubiquinone biosynthesis O-methyltransferase from Shewanella sp. (strain MR-4).